We begin with the raw amino-acid sequence, 240 residues long: Ribosomal RNA large subunit methyltransferase E (240 aa).

Gly residues predominate over residues 1 to 20 (MSKAGGNKGGSRTGGRGGAG). The interval 1–33 (MSKAGGNKGGSRTGGRGGAGSSNLHVRVKKKAG) is disordered. Gly-92, Trp-94, Asp-115, Asp-131, and Asp-155 together coordinate S-adenosyl-L-methionine. Lys-195 acts as the Proton acceptor in catalysis.

It belongs to the class I-like SAM-binding methyltransferase superfamily. RNA methyltransferase RlmE family.

The protein resides in the cytoplasm. It catalyses the reaction uridine(2552) in 23S rRNA + S-adenosyl-L-methionine = 2'-O-methyluridine(2552) in 23S rRNA + S-adenosyl-L-homocysteine + H(+). Its function is as follows. Specifically methylates the uridine in position 2552 of 23S rRNA at the 2'-O position of the ribose in the fully assembled 50S ribosomal subunit. This is Ribosomal RNA large subunit methyltransferase E from Brucella abortus (strain S19).